Reading from the N-terminus, the 636-residue chain is Probable potassium transport system protein Kup (636 aa).

The next 12 helical transmembrane spans lie at 23-43 (LVIGAIGVVFGDIGTSPLYSL), 63-83 (IISLLFWAMTIVVSIKYVVFV), 114-134 (VLMMLGIFGACMFYGDAVITP), 150-170 (PQLSRFVIPITLVILVALFLI), 182-202 (FGPVMVVWFVTLGLLGLYNLV), 217-237 (ISFLIAHSLQAFIVLGSVFLV), 260-280 (WFVLVMPCLILNYFGQGAMLL), 298-318 (LLIPMVVLATCATVIASQAVI), 350-370 (IYLPVINWILLVLVVAVVISF), 379-399 (AYGIAVTTTMVITTFLAAVVM), 407-427 (PALVTLLGLSFLLVDLAFFAA), and 432-452 (VAEGGWFPLLLGSTAFFLLMT).

Belongs to the HAK/KUP transporter (TC 2.A.72) family.

The protein localises to the cell inner membrane. It catalyses the reaction K(+)(in) + H(+)(in) = K(+)(out) + H(+)(out). Functionally, transport of potassium into the cell. Likely operates as a K(+):H(+) symporter. In Cupriavidus pinatubonensis (strain JMP 134 / LMG 1197) (Cupriavidus necator (strain JMP 134)), this protein is Probable potassium transport system protein Kup.